Consider the following 239-residue polypeptide: tRNA (guanine-N(7)-)-methyltransferase (239 aa).

S-adenosyl-L-methionine is bound by residues Glu69, Glu94, Asp121, and Asp144. Residue Asp144 is part of the active site. Substrate is bound at residue Lys148. The tract at residues 150 to 155 (RHNKRR) is interaction with RNA. Substrate-binding positions include Asp180 and 217 to 220 (TKFE).

The protein belongs to the class I-like SAM-binding methyltransferase superfamily. TrmB family. Monomer.

It catalyses the reaction guanosine(46) in tRNA + S-adenosyl-L-methionine = N(7)-methylguanosine(46) in tRNA + S-adenosyl-L-homocysteine. It functions in the pathway tRNA modification; N(7)-methylguanine-tRNA biosynthesis. Catalyzes the formation of N(7)-methylguanine at position 46 (m7G46) in tRNA. The sequence is that of tRNA (guanine-N(7)-)-methyltransferase from Shigella dysenteriae serotype 1 (strain Sd197).